Reading from the N-terminus, the 162-residue chain is Phosphopantetheine adenylyltransferase (162 aa).

S11 lines the substrate pocket. Residues 11 to 12 and H19 each bind ATP; that span reads SF. Substrate-binding residues include K43, L75, and R89. Residues 90 to 92, E100, and 125 to 131 each bind ATP; these read GLR and YSYLSSS.

This sequence belongs to the bacterial CoaD family. Homohexamer. Requires Mg(2+) as cofactor.

Its subcellular location is the cytoplasm. It catalyses the reaction (R)-4'-phosphopantetheine + ATP + H(+) = 3'-dephospho-CoA + diphosphate. It functions in the pathway cofactor biosynthesis; coenzyme A biosynthesis; CoA from (R)-pantothenate: step 4/5. Functionally, reversibly transfers an adenylyl group from ATP to 4'-phosphopantetheine, yielding dephospho-CoA (dPCoA) and pyrophosphate. The polypeptide is Phosphopantetheine adenylyltransferase (Geotalea uraniireducens (strain Rf4) (Geobacter uraniireducens)).